A 195-amino-acid chain; its full sequence is Cysteine/O-acetylserine efflux protein (195 aa).

Topologically, residues 1–7 (MTPTLLS) are periplasmic. Residues 8–28 (AFWTYTLITAMTPGPNNILAL) form a helical membrane-spanning segment. At 29 to 46 (SSATSHGFRQSTRVLAGM) the chain is on the cytoplasmic side. The helical transmembrane segment at 47–67 (SLGFLIVMLLCAGISFSLAVI) threads the bilayer. Residues 68–69 (DP) are Periplasmic-facing. Residues 70–90 (AAVHLLSWAGAAYIVWLAWKI) traverse the membrane as a helical segment. The Cytoplasmic segment spans residues 91-104 (ATSPTKEDGLQTKP). The helical transmembrane segment at 105–125 (ISFWASFALQFVNVKIILYGV) threads the bilayer. The Periplasmic segment spans residues 126-141 (TALSTFVLPQTQALSW). The helical transmembrane segment at 142–162 (VVGVSVLLAMIGTFGNVCWAL) threads the bilayer. The Cytoplasmic portion of the chain corresponds to 163 to 176 (AGHLFQRLFRQYGR). Residues 177 to 194 (QLNIVLALLLVYCAVRIF) form a helical membrane-spanning segment. Position 195 (Tyr-195) is a topological domain, periplasmic.

It belongs to the Rht family.

It localises to the cell inner membrane. It catalyses the reaction O-acetyl-L-serine(in) = O-acetyl-L-serine(out). The catalysed reaction is L-cysteine(in) = L-cysteine(out). Functionally, exporter of O-acetylserine (OAS) and cysteine. This Escherichia coli O1:K1 / APEC protein is Cysteine/O-acetylserine efflux protein (eamB).